Here is a 389-residue protein sequence, read N- to C-terminus: Acetoin utilization protein AcuC (389 aa).

Belongs to the histone deacetylase family.

It participates in ketone degradation; acetoin degradation. Role in growth on acetoin or butanediol. Involved in the breakdown of these compounds used as a carbon source. This chain is Acetoin utilization protein AcuC (acuC), found in Staphylococcus aureus (strain Mu50 / ATCC 700699).